A 459-amino-acid chain; its full sequence is Bifunctional protein GlmU (459 aa).

The tract at residues 1–230 is pyrophosphorylase; that stretch reads MSNRFAVILA…FDETLGVNDR (230 aa). UDP-N-acetyl-alpha-D-glucosamine is bound by residues 9–12, lysine 23, glutamine 73, and 78–79; these read LAAG and GT. Aspartate 103 is a binding site for Mg(2+). UDP-N-acetyl-alpha-D-glucosamine is bound by residues glycine 140, glutamate 155, asparagine 170, and asparagine 228. Residue asparagine 228 participates in Mg(2+) binding. Residues 231 to 251 form a linker region; the sequence is VALSQAEIIMKNRINRKNMVN. Residues 252–459 form an N-acetyltransferase region; it reads GVTIIDPSNT…VDQLLNKKKS (208 aa). UDP-N-acetyl-alpha-D-glucosamine contacts are provided by arginine 333 and lysine 351. Histidine 363 acts as the Proton acceptor in catalysis. UDP-N-acetyl-alpha-D-glucosamine is bound by residues tyrosine 366 and asparagine 377. Acetyl-CoA is bound by residues 386-387, alanine 423, and arginine 440; that span reads NY.

It in the N-terminal section; belongs to the N-acetylglucosamine-1-phosphate uridyltransferase family. In the C-terminal section; belongs to the transferase hexapeptide repeat family. As to quaternary structure, homotrimer. Mg(2+) is required as a cofactor.

The protein localises to the cytoplasm. The enzyme catalyses alpha-D-glucosamine 1-phosphate + acetyl-CoA = N-acetyl-alpha-D-glucosamine 1-phosphate + CoA + H(+). The catalysed reaction is N-acetyl-alpha-D-glucosamine 1-phosphate + UTP + H(+) = UDP-N-acetyl-alpha-D-glucosamine + diphosphate. The protein operates within nucleotide-sugar biosynthesis; UDP-N-acetyl-alpha-D-glucosamine biosynthesis; N-acetyl-alpha-D-glucosamine 1-phosphate from alpha-D-glucosamine 6-phosphate (route II): step 2/2. It functions in the pathway nucleotide-sugar biosynthesis; UDP-N-acetyl-alpha-D-glucosamine biosynthesis; UDP-N-acetyl-alpha-D-glucosamine from N-acetyl-alpha-D-glucosamine 1-phosphate: step 1/1. It participates in bacterial outer membrane biogenesis; LPS lipid A biosynthesis. In terms of biological role, catalyzes the last two sequential reactions in the de novo biosynthetic pathway for UDP-N-acetylglucosamine (UDP-GlcNAc). The C-terminal domain catalyzes the transfer of acetyl group from acetyl coenzyme A to glucosamine-1-phosphate (GlcN-1-P) to produce N-acetylglucosamine-1-phosphate (GlcNAc-1-P), which is converted into UDP-GlcNAc by the transfer of uridine 5-monophosphate (from uridine 5-triphosphate), a reaction catalyzed by the N-terminal domain. This chain is Bifunctional protein GlmU, found in Bacillus thuringiensis subsp. konkukian (strain 97-27).